Here is a 235-residue protein sequence, read N- to C-terminus: 2-C-methyl-D-erythritol 4-phosphate cytidylyltransferase (235 aa).

The protein belongs to the IspD/TarI cytidylyltransferase family. IspD subfamily. As to quaternary structure, homodimer.

The enzyme catalyses 2-C-methyl-D-erythritol 4-phosphate + CTP + H(+) = 4-CDP-2-C-methyl-D-erythritol + diphosphate. It functions in the pathway isoprenoid biosynthesis; isopentenyl diphosphate biosynthesis via DXP pathway; isopentenyl diphosphate from 1-deoxy-D-xylulose 5-phosphate: step 2/6. Catalyzes the formation of 4-diphosphocytidyl-2-C-methyl-D-erythritol from CTP and 2-C-methyl-D-erythritol 4-phosphate (MEP). This chain is 2-C-methyl-D-erythritol 4-phosphate cytidylyltransferase, found in Serratia proteamaculans (strain 568).